The primary structure comprises 410 residues: MAGSAGSAGGSARKRLMKEEDMTKVEFETSEEVDVTPTFDTMGLREDLLRGIYAYGFEKPSAIQQRAIKQIIKGRDVIAQSQSGTGKTATFSISVLQCLDIQVRETQALILAPTRELAVQIQKGLLALGDYMNVQCHACIGGTNVGEDIRKLDYGQHVVAGTPGRVFDMIRRRSLRTRAIKMLVLDEADEMLNKGFKEQIYDVYRYLPPATQVVLISATLPHEILEMTNKFMTDPIRILVKRDELTLEGIKQFFVAVEREEWKFDTLCDLYDTLTITQAVIFCNTKRKVDWLTEKMREANFTVSSMHGDMPQKERESIMKEFRSGASRVLISTDVWARGLDVPQVSLIINYDLPNNRELYIHRIGRSGRYGRKGVAINFVKNDDIRILRDIEQYYSTQIDEMPMNVADLI.

The interval 1 to 20 (MAGSAGSAGGSARKRLMKEE) is disordered. The Q motif signature appears at 37 to 65 (PTFDTMGLREDLLRGIYAYGFEKPSAIQQ). ATP-binding positions include K59, Q64, 81-88 (SQSGTGKT), and 84-89 (GTGKTA). Positions 68–238 (IKQIIKGRDV…NKFMTDPIRI (171 aa)) constitute a Helicase ATP-binding domain. Positions 186-189 (DEAD) match the DEAD box motif. Residues 249–410 (GIKQFFVAVE…EMPMNVADLI (162 aa)) enclose the Helicase C-terminal domain. ATP-binding positions include D341 and 366-370 (RSGRY).

It belongs to the DEAD box helicase family. eIF4A subfamily. Identified in the spliceosome C complex. Part of the mRNA splicing-dependent exon junction complex (EJC) complex; the core complex contains casc3, eif4a3, magoh and rbm8a.

The protein localises to the nucleus. The protein resides in the nucleus speckle. It is found in the cytoplasm. It catalyses the reaction ATP + H2O = ADP + phosphate + H(+). Its function is as follows. ATP-dependent RNA helicase. Involved in pre-mRNA splicing as component of the spliceosome. Core component of the splicing-dependent multiprotein exon junction complex (EJC) deposited at splice junctions on mRNAs. The EJC is a dynamic structure consisting of core proteins and several peripheral nuclear and cytoplasmic associated factors that join the complex only transiently either during EJC assembly or during subsequent mRNA metabolism. The EJC marks the position of the exon-exon junction in the mature mRNA for the gene expression machinery and the core components remain bound to spliced mRNAs throughout all stages of mRNA metabolism thereby influencing downstream processes including nuclear mRNA export, subcellular mRNA localization, translation efficiency and nonsense-mediated mRNA decay (NMD). Binds spliced mRNA in sequence-independent manner, 20-24 nucleotides upstream of mRNA exon-exon junctions. Involved in craniofacial development. This is Eukaryotic initiation factor 4A-III (EIF4A3) from Taeniopygia guttata (Zebra finch).